The sequence spans 202 residues: Protein phosphatase 1 regulatory subunit 1B (202 aa).

Position 1 is an N-acetylmethionine (methionine 1). The tract at residues 1 to 202 is disordered; that stretch reads MDPKDRKKIQ…QRPAHPEPGT (202 aa). Threonine 34 carries the phosphothreonine; by PKA modification. The segment covering 41–63 has biased composition (basic and acidic residues); it reads LSEHSSPEEEASPHQRASGEGHH. Phosphoserine is present on residues serine 45 and serine 46. At threonine 75 the chain carries Phosphothreonine; by CDK5. The span at 89 to 100 shows a compositional bias: polar residues; that stretch reads HLQSISNLGENQ. Position 102 is a phosphoserine (serine 102). A compositionally biased stretch (basic and acidic residues) spans 109–118; sequence GELRELGYPR. A compositionally biased stretch (acidic residues) spans 119-136; that stretch reads EEEEEEEEEDEEEEEDSQ. Serine 135 is modified (phosphoserine). A compositionally biased stretch (basic and acidic residues) spans 191–202; that stretch reads EPQRPAHPEPGT.

This sequence belongs to the protein phosphatase inhibitor 1 family. Post-translationally, dopamine- and cyclic AMP-regulated neuronal phosphoprotein. Phosphorylation of Thr-34 is required for activity.

The protein localises to the cytoplasm. In terms of biological role, inhibitor of protein-phosphatase 1. The protein is Protein phosphatase 1 regulatory subunit 1B (PPP1R1B) of Bos taurus (Bovine).